The primary structure comprises 306 residues: Ornithine carbamoyltransferase, anabolic (306 aa).

Residues 46–49 (STRT), Gln73, Arg97, and 124–127 (HPTQ) contribute to the carbamoyl phosphate site. Residues Asn156, Asp220, and 224–225 (SM) each bind L-ornithine. Carbamoyl phosphate-binding positions include 260-261 (CL) and Arg288.

It belongs to the aspartate/ornithine carbamoyltransferase superfamily. OTCase family. As to quaternary structure, homohexamer; dimer of trimers.

It is found in the cytoplasm. It carries out the reaction carbamoyl phosphate + L-ornithine = L-citrulline + phosphate + H(+). The protein operates within amino-acid biosynthesis; L-arginine biosynthesis; L-arginine from L-ornithine and carbamoyl phosphate: step 1/3. Reversibly catalyzes the transfer of the carbamoyl group from carbamoyl phosphate (CP) to the N(epsilon) atom of ornithine (ORN) to produce L-citrulline, which is a substrate for argininosuccinate synthetase (ArgG) involved in the final step in arginine biosynthesis. The chain is Ornithine carbamoyltransferase, anabolic from Campylobacter jejuni subsp. jejuni serotype O:2 (strain ATCC 700819 / NCTC 11168).